Here is a 497-residue protein sequence, read N- to C-terminus: Probable malate:quinone oxidoreductase (497 aa).

Belongs to the MQO family. The cofactor is FAD.

It catalyses the reaction (S)-malate + a quinone = a quinol + oxaloacetate. It participates in carbohydrate metabolism; tricarboxylic acid cycle; oxaloacetate from (S)-malate (quinone route): step 1/1. The chain is Probable malate:quinone oxidoreductase from Rhodopseudomonas palustris (strain ATCC BAA-98 / CGA009).